Consider the following 75-residue polypeptide: Small ribosomal subunit protein bS18 (75 aa).

The protein belongs to the bacterial ribosomal protein bS18 family. In terms of assembly, part of the 30S ribosomal subunit. Forms a tight heterodimer with protein bS6.

Its function is as follows. Binds as a heterodimer with protein bS6 to the central domain of the 16S rRNA, where it helps stabilize the platform of the 30S subunit. The sequence is that of Small ribosomal subunit protein bS18 from Alteromonas mediterranea (strain DSM 17117 / CIP 110805 / LMG 28347 / Deep ecotype).